A 1226-amino-acid chain; its full sequence is uncharacterized protein (1226 aa).

It belongs to the Mg-chelatase subunit H family.

This is an uncharacterized protein from Methanocaldococcus jannaschii (strain ATCC 43067 / DSM 2661 / JAL-1 / JCM 10045 / NBRC 100440) (Methanococcus jannaschii).